A 27-amino-acid chain; its full sequence is Caerulein precursor fragment R2 (27 aa).

Expressed by the skin glands.

Its subcellular location is the secreted. Its function is as follows. Antimicrobial peptide. This is Caerulein precursor fragment R2 from Xenopus ruwenzoriensis (Uganda clawed frog).